Consider the following 110-residue polypeptide: MIVTTSPNIEGKQIIEYKKIVFGEVITGVNFMKDIGAGLRNFFGGRSQGYEDELINAREEAIKEMEQRAKDIGANAVIGVDIDYEVLGADNGMLMVTASGTAVVIEAQDY.

Belongs to the UPF0145 family.

This is UPF0145 protein from Listeria ivanovii.